A 361-amino-acid chain; its full sequence is Phospho-N-acetylmuramoyl-pentapeptide-transferase (361 aa).

A run of 10 helical transmembrane segments spans residues 27-47 (GALFTAGLFVFWFGPWIISLL), 72-92 (TPTMGGLMILAGLLVAVLLWA), 99-119 (VWITVVVTLGFGAIGFYDDYL), 139-159 (ALIAVAACVAVAEYSAPGLAY), 169-189 (AIVNLGLFWILFASFVIVGAG), 200-220 (GLAIVPVMIAAATFGIIAYLV), 240-260 (LAVVCGALIGAGLGFLWFNAP), 264-284 (IFMGDTGSLALGGLLGTVAVA), 289-309 (IVLAVVGGLFVLEIASVIIQV), and 338-358 (QVVIRFWIIAVVLALLGLATL).

The protein belongs to the glycosyltransferase 4 family. MraY subfamily. Mg(2+) serves as cofactor.

The protein resides in the cell inner membrane. The catalysed reaction is UDP-N-acetyl-alpha-D-muramoyl-L-alanyl-gamma-D-glutamyl-meso-2,6-diaminopimeloyl-D-alanyl-D-alanine + di-trans,octa-cis-undecaprenyl phosphate = di-trans,octa-cis-undecaprenyl diphospho-N-acetyl-alpha-D-muramoyl-L-alanyl-D-glutamyl-meso-2,6-diaminopimeloyl-D-alanyl-D-alanine + UMP. It functions in the pathway cell wall biogenesis; peptidoglycan biosynthesis. Its function is as follows. Catalyzes the initial step of the lipid cycle reactions in the biosynthesis of the cell wall peptidoglycan: transfers peptidoglycan precursor phospho-MurNAc-pentapeptide from UDP-MurNAc-pentapeptide onto the lipid carrier undecaprenyl phosphate, yielding undecaprenyl-pyrophosphoryl-MurNAc-pentapeptide, known as lipid I. This chain is Phospho-N-acetylmuramoyl-pentapeptide-transferase, found in Methylobacterium nodulans (strain LMG 21967 / CNCM I-2342 / ORS 2060).